Reading from the N-terminus, the 122-residue chain is MIQQETRLRVGDNTGAKELLCIRVLGGSYRRYASVGDIIVASVKEATPGGVVKKGDVVKAVVVRTRKPIKRPDGSYIRFSENAAVIINEQKNPKGTRIFGPVARELRDRDFMKIISLAPEVL.

The protein belongs to the universal ribosomal protein uL14 family. Part of the 50S ribosomal subunit. Forms a cluster with proteins L3 and L19. In the 70S ribosome, L14 and L19 interact and together make contacts with the 16S rRNA in bridges B5 and B8.

Functionally, binds to 23S rRNA. Forms part of two intersubunit bridges in the 70S ribosome. This is Large ribosomal subunit protein uL14 from Heliobacterium modesticaldum (strain ATCC 51547 / Ice1).